The following is a 519-amino-acid chain: Cytosol aminopeptidase (519 aa).

Position 42 is a phosphoserine (S42). N6-succinyllysine is present on K45. A Phosphoserine modification is found at S54. 2 positions are modified to N6-succinyllysine: K61 and K103. S180 and S194 each carry phosphoserine. Zn(2+) contacts are provided by L202, M203, and T205. Phosphoserine is present on S238. Positions 282 and 287 each coordinate Zn(2+). The substrate site is built by K282, D287, S292, and K294. D287 lines the Mg(2+) pocket. K294 is an active-site residue. R303, D305, D364, and E366 together coordinate Zn(2+). Substrate is bound by residues D305 and D364. Residues D364 and E366 each coordinate Mg(2+). R368 is an active-site residue. K455 carries the post-translational modification N6-acetyllysine; alternate. At K455 the chain carries N6-succinyllysine; alternate. K476 carries the N6-succinyllysine modification. The residue at position 489 (K489) is an N6-acetyllysine; alternate. K489 is modified (N6-succinyllysine; alternate).

The protein belongs to the peptidase M17 family. As to quaternary structure, homohexamer. Zn(2+) is required as a cofactor. Mn(2+) serves as cofactor.

It localises to the cytoplasm. It catalyses the reaction Release of an N-terminal amino acid, Xaa-|-Yaa-, in which Xaa is preferably Leu, but may be other amino acids including Pro although not Arg or Lys, and Yaa may be Pro. Amino acid amides and methyl esters are also readily hydrolyzed, but rates on arylamides are exceedingly low.. It carries out the reaction an S-substituted L-cysteinylglycine + H2O = an S-substituted L-cysteine + glycine. The enzyme catalyses L-cysteinylglycine + H2O = L-cysteine + glycine. The catalysed reaction is S-benzyl-L-cysteinylglycine + H2O = S-benzyl-L-cysteine + glycine. It catalyses the reaction Release of N-terminal proline from a peptide.. Its activity is regulated as follows. Zofenoprilat inhibits Cys-Gly hydrolysis activity. In terms of biological role, cytosolic metallopeptidase that catalyzes the removal of unsubstituted N-terminal hydrophobic amino acids from various peptides. The presence of Zn(2+) ions is essential for the peptidase activity, and the association with other cofactors can modulate the substrate spectificity of the enzyme. For instance, in the presence of Mn(2+), it displays a specific Cys-Gly hydrolyzing activity of Cys-Gly-S-conjugates. Involved in the metabolism of glutathione and in the degradation of glutathione S-conjugates, which may play a role in the control of the cell redox status. The polypeptide is Cytosol aminopeptidase (Bos taurus (Bovine)).